The primary structure comprises 373 residues: MTTEKVNLLDFDRKGLRTFFAEELGEKAFRAEQVMKWIYHFGCDDFDQMNNINKQLREKLKAKCEIRAPYVSEAQHSADGTIKWAMRVGDQDVETVYIPEDDRATLCVSSQVGCALECKFCSTAQQGFNRNLRVSEIIGQVWRAAREIGLEKETGRRPITNVVMMGMGEPLLNMKNLIPALEIMLDDLGFGLSKRRVTVSTSGVVSGLEQMIGQIDVALAISLHAPNDKLRSEIMPINDRWNIEAFLEVVRRYIASSNANRGKVTVEYVLLDHVNDGTEHAHELAELLKGTPCKINLIPFNPYPGSPYKKPSNSRIDRFQKTLMQYEHTVTIRKTRGDDIDAACGQLVGDVIDRTKRTKAKQFDGQAIPVKTL.

Glu94 serves as the catalytic Proton acceptor. Residues 100 to 339 (EDDRATLCVS…VTIRKTRGDD (240 aa)) form the Radical SAM core domain. Cys107 and Cys344 are joined by a disulfide. The [4Fe-4S] cluster site is built by Cys114, Cys118, and Cys121. Residues 168-169 (GE), Ser200, 222-224 (SLH), and Asn301 each bind S-adenosyl-L-methionine. The S-methylcysteine intermediate role is filled by Cys344.

It belongs to the radical SAM superfamily. RlmN family. It depends on [4Fe-4S] cluster as a cofactor.

The protein localises to the cytoplasm. It carries out the reaction adenosine(2503) in 23S rRNA + 2 reduced [2Fe-2S]-[ferredoxin] + 2 S-adenosyl-L-methionine = 2-methyladenosine(2503) in 23S rRNA + 5'-deoxyadenosine + L-methionine + 2 oxidized [2Fe-2S]-[ferredoxin] + S-adenosyl-L-homocysteine. The enzyme catalyses adenosine(37) in tRNA + 2 reduced [2Fe-2S]-[ferredoxin] + 2 S-adenosyl-L-methionine = 2-methyladenosine(37) in tRNA + 5'-deoxyadenosine + L-methionine + 2 oxidized [2Fe-2S]-[ferredoxin] + S-adenosyl-L-homocysteine. Its function is as follows. Specifically methylates position 2 of adenine 2503 in 23S rRNA and position 2 of adenine 37 in tRNAs. m2A2503 modification seems to play a crucial role in the proofreading step occurring at the peptidyl transferase center and thus would serve to optimize ribosomal fidelity. This is Dual-specificity RNA methyltransferase RlmN from Vibrio cholerae serotype O1 (strain M66-2).